The sequence spans 373 residues: Probable peptidoglycan glycosyltransferase FtsW (373 aa).

9 helical membrane passes run 15–35 (LVIL…VYSA), 48–68 (FYFL…MAVA), 80–100 (AVPI…PGIG), 144–164 (FFST…LILL), 168–188 (DLGA…AAGT), 192–212 (YIIA…MNVD), 278–298 (LGLI…LRGV), 311–331 (FLAF…MAVV), and 342–362 (LPFI…VGIL).

Belongs to the SEDS family. FtsW subfamily.

It is found in the cell inner membrane. It carries out the reaction [GlcNAc-(1-&gt;4)-Mur2Ac(oyl-L-Ala-gamma-D-Glu-L-Lys-D-Ala-D-Ala)](n)-di-trans,octa-cis-undecaprenyl diphosphate + beta-D-GlcNAc-(1-&gt;4)-Mur2Ac(oyl-L-Ala-gamma-D-Glu-L-Lys-D-Ala-D-Ala)-di-trans,octa-cis-undecaprenyl diphosphate = [GlcNAc-(1-&gt;4)-Mur2Ac(oyl-L-Ala-gamma-D-Glu-L-Lys-D-Ala-D-Ala)](n+1)-di-trans,octa-cis-undecaprenyl diphosphate + di-trans,octa-cis-undecaprenyl diphosphate + H(+). It functions in the pathway cell wall biogenesis; peptidoglycan biosynthesis. In terms of biological role, peptidoglycan polymerase that is essential for cell division. This chain is Probable peptidoglycan glycosyltransferase FtsW, found in Geobacter sulfurreducens (strain DL-1 / KN400).